A 156-amino-acid chain; its full sequence is Transcriptional repressor NrdR (156 aa).

A zinc finger spans residues 3–34; the sequence is CPFCQHDDTQVLDTRISEEGDSIRRRRRCVSC. The ATP-cone domain maps to 49–139; sequence PVIVKKNGSR…VYKSFEDVAE (91 aa).

The protein belongs to the NrdR family. Requires Zn(2+) as cofactor.

Functionally, negatively regulates transcription of bacterial ribonucleotide reductase nrd genes and operons by binding to NrdR-boxes. The sequence is that of Transcriptional repressor NrdR from Herminiimonas arsenicoxydans.